A 551-amino-acid polypeptide reads, in one-letter code: Probable terpene synthase 8 (551 aa).

Positions 307, 311, and 457 each coordinate Mg(2+). The DDXXD motif signature appears at 307-311 (DDTYD).

This sequence belongs to the terpene synthase family. Mg(2+) is required as a cofactor.

Its function is as follows. Probable sesquiterpene synthase. This is Probable terpene synthase 8 (TPS8) from Ricinus communis (Castor bean).